A 390-amino-acid chain; its full sequence is Putative 8-amino-7-oxononanoate synthase (390 aa).

Residue arginine 20 participates in substrate binding. 107–108 (GY) is a pyridoxal 5'-phosphate binding site. Histidine 132 is a binding site for substrate. Pyridoxal 5'-phosphate-binding positions include serine 181, 206–209 (DDAH), and 237–240 (TLGK). Lysine 240 is subject to N6-(pyridoxal phosphate)lysine. Threonine 356 is a substrate binding site.

It belongs to the class-II pyridoxal-phosphate-dependent aminotransferase family. BioF subfamily. Homodimer. Pyridoxal 5'-phosphate is required as a cofactor.

The catalysed reaction is 6-carboxyhexanoyl-[ACP] + L-alanine + H(+) = (8S)-8-amino-7-oxononanoate + holo-[ACP] + CO2. Its pathway is cofactor biosynthesis; biotin biosynthesis. Functionally, catalyzes the decarboxylative condensation of pimeloyl-[acyl-carrier protein] and L-alanine to produce 8-amino-7-oxononanoate (AON), [acyl-carrier protein], and carbon dioxide. This chain is Putative 8-amino-7-oxononanoate synthase (bioF), found in Syntrophotalea carbinolica (strain DSM 2380 / NBRC 103641 / GraBd1) (Pelobacter carbinolicus).